Reading from the N-terminus, the 122-residue chain is Large ribosomal subunit protein uL14 (122 aa).

This sequence belongs to the universal ribosomal protein uL14 family. As to quaternary structure, part of the 50S ribosomal subunit. Forms a cluster with proteins L3 and L19. In the 70S ribosome, L14 and L19 interact and together make contacts with the 16S rRNA in bridges B5 and B8.

Functionally, binds to 23S rRNA. Forms part of two intersubunit bridges in the 70S ribosome. This is Large ribosomal subunit protein uL14 from Bdellovibrio bacteriovorus (strain ATCC 15356 / DSM 50701 / NCIMB 9529 / HD100).